The following is a 977-amino-acid chain: DNA-directed RNA polymerase 3B, chloroplastic (977 aa).

The N-terminal 71 residues, 1 to 71 (MASTASYSPS…NNIQSQTTVC (71 aa)), are a transit peptide targeting the chloroplast. Catalysis depends on residues Asp-678, Lys-753, and Asp-910.

Belongs to the phage and mitochondrial RNA polymerase family.

The protein localises to the plastid. The protein resides in the chloroplast. The catalysed reaction is RNA(n) + a ribonucleoside 5'-triphosphate = RNA(n+1) + diphosphate. In terms of biological role, DNA-dependent RNA polymerase catalyzes the transcription of DNA into RNA using the four ribonucleoside triphosphates as substrates. The polypeptide is DNA-directed RNA polymerase 3B, chloroplastic (RPOT3-TOM) (Nicotiana tabacum (Common tobacco)).